Reading from the N-terminus, the 318-residue chain is Biotin synthase (318 aa).

Residues 44–270 (LCGDAVNLCS…INPTANIRLA (227 aa)) enclose the Radical SAM core domain. Residues Cys62, Cys66, and Cys69 each contribute to the [4Fe-4S] cluster site. 4 residues coordinate [2Fe-2S] cluster: Ser106, Cys138, Cys198, and Arg268.

Belongs to the radical SAM superfamily. Biotin synthase family. In terms of assembly, homodimer. [4Fe-4S] cluster is required as a cofactor. It depends on [2Fe-2S] cluster as a cofactor.

The enzyme catalyses (4R,5S)-dethiobiotin + (sulfur carrier)-SH + 2 reduced [2Fe-2S]-[ferredoxin] + 2 S-adenosyl-L-methionine = (sulfur carrier)-H + biotin + 2 5'-deoxyadenosine + 2 L-methionine + 2 oxidized [2Fe-2S]-[ferredoxin]. It participates in cofactor biosynthesis; biotin biosynthesis; biotin from 7,8-diaminononanoate: step 2/2. Catalyzes the conversion of dethiobiotin (DTB) to biotin by the insertion of a sulfur atom into dethiobiotin via a radical-based mechanism. The polypeptide is Biotin synthase (Alkaliphilus metalliredigens (strain QYMF)).